A 616-amino-acid chain; its full sequence is Chaperone protein HscA (616 aa).

It belongs to the heat shock protein 70 family.

Functionally, chaperone involved in the maturation of iron-sulfur cluster-containing proteins. Has a low intrinsic ATPase activity which is markedly stimulated by HscB. Involved in the maturation of IscU. The chain is Chaperone protein HscA from Salmonella newport (strain SL254).